The sequence spans 249 residues: Small ribosomal subunit protein uS2 (249 aa).

The protein belongs to the universal ribosomal protein uS2 family.

The chain is Small ribosomal subunit protein uS2 from Polynucleobacter asymbioticus (strain DSM 18221 / CIP 109841 / QLW-P1DMWA-1) (Polynucleobacter necessarius subsp. asymbioticus).